A 1534-amino-acid chain; its full sequence is Activating signal cointegrator 1 complex subunit 3 (1534 aa).

The region spanning 83 to 267 (ETAYNTNENL…FLHVNPFIGL (185 aa)) is the Helicase ATP-binding 1 domain. 96–103 (APTGAGKT) is an ATP binding site. The DEVH box motif lies at 209–212 (DEVH). Residues 294-500 (QLHDMEEVCY…SLADNLNAEI (207 aa)) enclose the Helicase C-terminal 1 domain. Residues 576–849 (STDLGRTASH…GSEAVCIINF (274 aa)) enclose the SEC63 1 domain. The region spanning 898 to 1073 (HTLYHTDTNV…WLGIGQVGLF (176 aa)) is the Helicase ATP-binding 2 domain. 911–918 (APTGSGKT) contacts ATP. A DEIH box motif is present at residues 1015-1018 (DEIH). The 208-residue stretch at 1106–1313 (PVFQAIRTHS…GTVTSKQDAM (208 aa)) folds into the Helicase C-terminal 2 domain. The SEC63 2 domain maps to 1374–1481 (PLTYGRISSY…TLPHIQKQEL (108 aa)).

The protein belongs to the helicase family.

The protein localises to the nucleus. The protein resides in the nucleus speckle. Its subcellular location is the cytoplasm. It localises to the cytosol. The enzyme catalyses Couples ATP hydrolysis with the unwinding of duplex DNA by translocating in the 3'-5' direction.. It catalyses the reaction ATP + H2O = ADP + phosphate + H(+). In terms of biological role, 3'-5' DNA helicase involved in repair of alkylated DNA. Promotes DNA unwinding to generate single-stranded substrate needed for alkbh3, enabling alkbh3 to process alkylated N3-methylcytosine (3mC) within double-stranded regions. Also involved in activation of the ribosome quality control (RQC) pathway, a pathway that degrades nascent peptide chains during problematic translation. Drives the splitting of stalled ribosomes. This Danio rerio (Zebrafish) protein is Activating signal cointegrator 1 complex subunit 3 (ascc3).